The sequence spans 359 residues: MPLELELCPGRWVGGQHPCFIIAEIGQNHQGDLDVAKRMIRMAKECGADCAKFQKSELEFKFNRKALERPYTSKHSWGKTYGEHKRHLEFSHDQYRELQRYAEEVGIFFTASGMDEMAVEFLHELNVPFFKVGSGDTNNFPYLEKTAKKGRPMVISSGMQSMDTMKQVYQIVKPLNPNFCFLQCTSAYPLQPEDVNLRVISEYQKLFPDIPIGYSGHETGIAISVAAVALGAKVLERHITLDKTWKGSDHSASLEPGELAELVRSVRLVERALGSPTKQLLPCEMACNEKLGKSVVAKVKIPEGTILTMDMLTVKVGEPKGYPPEDIFNLVGKKVLVTVEEDDTIMEELVDNHGKKIKS.

N6-acetyllysine occurs at positions 61, 74, and 79. At serine 275 the chain carries Phosphoserine. Residue lysine 290 is modified to N6-acetyllysine. Positions 294–353 (SVVAKVKIPEGTILTMDMLTVKVGEPKGYPPEDIFNLVGKKVLVTVEEDDTIMEELVDNH) constitute an AFP-like domain.

As to expression, ubiquitous.

The enzyme catalyses aldehydo-N-acetyl-D-mannosamine 6-phosphate + phosphoenolpyruvate + H2O = N-acetylneuraminate 9-phosphate + phosphate. It catalyses the reaction aldehydo-D-mannose 6-phosphate + phosphoenolpyruvate + H2O = 3-deoxy-D-glycero-beta-D-galacto-non-2-ulopyranosonate 9-phosphate + phosphate. In terms of biological role, catalyzes the condensation of phosphoenolpyruvate (PEP) and N-acetylmannosamine 6-phosphate (ManNAc-6-P) to synthesize N-acetylneuraminate-9-phosphate (Neu5Ac-9-P). Also catalyzes the condensation of PEP and D-mannose 6-phosphate (Man-6-P) to produce 3-deoxy-D-glycero-beta-D-galacto-non-2-ulopyranosonate 9-phosphate (KDN-9-P). Neu5Ac-9-P and KDN-9-P are the phosphorylated forms of sialic acids N-acetylneuraminic acid (Neu5Ac) and deaminoneuraminic acid (KDN), respectively. Required for brain and skeletal development. The protein is N-acetylneuraminate-9-phosphate synthase of Homo sapiens (Human).